The primary structure comprises 532 residues: KICSTOR complex protein ITFG2 (532 aa).

The stretch at 19 to 48 is one FG-GAP 1; atypical repeat; it reads FPHAICLGDVDNDTLNELVVGDTSGKLSVY. Ser-104 carries the phosphoserine modification. One copy of the FG-GAP 2; atypical repeat lies at 126 to 155; sequence NTKVMLISDIDGDGRCELVVGYTDRVVRAF. The segment at 248–271 is disordered; the sequence is PHPQQERLHSPHRQHQASHSPDSS.

In terms of assembly, part of the KICSTOR complex composed of KPTN, ITFG2, KICS2 and SZT2. SZT2 probably serves as a link between the other three proteins in the KICSTOR complex and may mediate the direct interaction with the GATOR complex via GATOR1. The KICSTOR complex interacts directly with the GATOR1 complex and most probably indirectly with the GATOR2 complex in an amino acid-independent manner.

It localises to the lysosome membrane. Functionally, as part of the KICSTOR complex functions in the amino acid-sensing branch of the TORC1 signaling pathway. Recruits, in an amino acid-independent manner, the GATOR1 complex to the lysosomal membranes and allows its interaction with GATOR2 and the RAG GTPases. Functions upstream of the RAG GTPases and is required to negatively regulate mTORC1 signaling in absence of amino acids. In absence of the KICSTOR complex mTORC1 is constitutively localized to the lysosome and activated. The KICSTOR complex is also probably involved in the regulation of mTORC1 by glucose. This chain is KICSTOR complex protein ITFG2, found in Bos taurus (Bovine).